Reading from the N-terminus, the 325-residue chain is Elongation factor P--(R)-beta-lysine ligase (325 aa).

76–78 (SPE) provides a ligand contact to substrate. ATP contacts are provided by residues 100 to 102 (RNE) and Asn-109. Residue Tyr-118 coordinates substrate. 244–245 (EL) lines the ATP pocket. Residue Glu-251 coordinates substrate. ATP is bound at residue Gly-300.

Belongs to the class-II aminoacyl-tRNA synthetase family. EpmA subfamily. In terms of assembly, homodimer.

The enzyme catalyses D-beta-lysine + L-lysyl-[protein] + ATP = N(6)-((3R)-3,6-diaminohexanoyl)-L-lysyl-[protein] + AMP + diphosphate + H(+). With EpmB is involved in the beta-lysylation step of the post-translational modification of translation elongation factor P (EF-P). Catalyzes the ATP-dependent activation of (R)-beta-lysine produced by EpmB, forming a lysyl-adenylate, from which the beta-lysyl moiety is then transferred to the epsilon-amino group of a conserved specific lysine residue in EF-P. This chain is Elongation factor P--(R)-beta-lysine ligase, found in Klebsiella pneumoniae subsp. pneumoniae (strain ATCC 700721 / MGH 78578).